The sequence spans 413 residues: Ribosomal RNA large subunit methyltransferase G (413 aa).

Positions 389 to 413 are disordered; it reads EAEVEQAFDTETPHPQSALYGKPKA.

The protein belongs to the methyltransferase superfamily. RlmG family.

It localises to the cytoplasm. The catalysed reaction is guanosine(1835) in 23S rRNA + S-adenosyl-L-methionine = N(2)-methylguanosine(1835) in 23S rRNA + S-adenosyl-L-homocysteine + H(+). Its function is as follows. Specifically methylates the guanine in position 1835 (m2G1835) of 23S rRNA. This chain is Ribosomal RNA large subunit methyltransferase G, found in Shewanella pealeana (strain ATCC 700345 / ANG-SQ1).